Here is a 210-residue protein sequence, read N- to C-terminus: ATP-dependent Clp protease proteolytic subunit 1 (210 aa).

Serine 106 functions as the Nucleophile in the catalytic mechanism. The active site involves histidine 131.

This sequence belongs to the peptidase S14 family. As to quaternary structure, fourteen ClpP subunits assemble into 2 heptameric rings which stack back to back to give a disk-like structure with a central cavity, resembling the structure of eukaryotic proteasomes.

The protein resides in the cytoplasm. It catalyses the reaction Hydrolysis of proteins to small peptides in the presence of ATP and magnesium. alpha-casein is the usual test substrate. In the absence of ATP, only oligopeptides shorter than five residues are hydrolyzed (such as succinyl-Leu-Tyr-|-NHMec, and Leu-Tyr-Leu-|-Tyr-Trp, in which cleavage of the -Tyr-|-Leu- and -Tyr-|-Trp bonds also occurs).. Its function is as follows. Cleaves peptides in various proteins in a process that requires ATP hydrolysis. Has a chymotrypsin-like activity. Plays a major role in the degradation of misfolded proteins. This Chelativorans sp. (strain BNC1) protein is ATP-dependent Clp protease proteolytic subunit 1.